Here is a 212-residue protein sequence, read N- to C-terminus: uncharacterized protein (212 aa).

Disordered stretches follow at residues 1-148 and 168-190; these read MEKD…LNDL and EVVT…LSED. The segment covering 61–70 has biased composition (basic and acidic residues); it reads KELESEDQGK. Polar residues predominate over residues 71 to 85; the sequence is DPSSNAEDASCQKNL. Basic and acidic residues-rich tracts occupy residues 99–115, 124–144, and 168–180; these read LGHE…KSDL, EGEH…ESIK, and EVVT…EKPS.

This is an uncharacterized protein from Homo sapiens (Human).